A 419-amino-acid chain; its full sequence is Phospho-N-acetylmuramoyl-pentapeptide-transferase (419 aa).

The next 10 helical transmembrane spans lie at Tyr22 to Gly42, Thr72 to Ala92, Ile99 to Ile119, Ile135 to Val155, Val208 to Asn228, Gly238 to Ser258, Leu278 to Tyr298, Phe303 to Ile323, Leu328 to Phe348, and Lys396 to Leu416.

The protein belongs to the glycosyltransferase 4 family. MraY subfamily. It depends on Mg(2+) as a cofactor.

It is found in the cell inner membrane. The catalysed reaction is UDP-N-acetyl-alpha-D-muramoyl-L-alanyl-gamma-D-glutamyl-meso-2,6-diaminopimeloyl-D-alanyl-D-alanine + di-trans,octa-cis-undecaprenyl phosphate = di-trans,octa-cis-undecaprenyl diphospho-N-acetyl-alpha-D-muramoyl-L-alanyl-D-glutamyl-meso-2,6-diaminopimeloyl-D-alanyl-D-alanine + UMP. The protein operates within cell wall biogenesis; peptidoglycan biosynthesis. Functionally, catalyzes the initial step of the lipid cycle reactions in the biosynthesis of the cell wall peptidoglycan: transfers peptidoglycan precursor phospho-MurNAc-pentapeptide from UDP-MurNAc-pentapeptide onto the lipid carrier undecaprenyl phosphate, yielding undecaprenyl-pyrophosphoryl-MurNAc-pentapeptide, known as lipid I. This chain is Phospho-N-acetylmuramoyl-pentapeptide-transferase, found in Porphyromonas gingivalis (strain ATCC 33277 / DSM 20709 / CIP 103683 / JCM 12257 / NCTC 11834 / 2561).